The sequence spans 148 residues: Putative nickel-responsive regulator (148 aa).

Ni(2+)-binding residues include histidine 88, histidine 99, histidine 101, and cysteine 107.

This sequence belongs to the transcriptional regulatory CopG/NikR family. Requires Ni(2+) as cofactor.

Transcriptional regulator. The chain is Putative nickel-responsive regulator from Helicobacter pylori (strain P12).